The chain runs to 197 residues: ATP-dependent Clp protease proteolytic subunit (197 aa).

The active-site Nucleophile is the Ser102. Residue His127 is part of the active site.

The protein belongs to the peptidase S14 family. Fourteen ClpP subunits assemble into 2 heptameric rings which stack back to back to give a disk-like structure with a central cavity, resembling the structure of eukaryotic proteasomes.

It localises to the cytoplasm. The enzyme catalyses Hydrolysis of proteins to small peptides in the presence of ATP and magnesium. alpha-casein is the usual test substrate. In the absence of ATP, only oligopeptides shorter than five residues are hydrolyzed (such as succinyl-Leu-Tyr-|-NHMec, and Leu-Tyr-Leu-|-Tyr-Trp, in which cleavage of the -Tyr-|-Leu- and -Tyr-|-Trp bonds also occurs).. Its function is as follows. Cleaves peptides in various proteins in a process that requires ATP hydrolysis. Has a chymotrypsin-like activity. Plays a major role in the degradation of misfolded proteins. This is ATP-dependent Clp protease proteolytic subunit from Buchnera aphidicola subsp. Schizaphis graminum (strain Sg).